The chain runs to 713 residues: Calpain-1 catalytic subunit (713 aa).

Positions 55–354 (LFQDEAFPPV…FTKLEICNLT (300 aa)) constitute a Calpain catalytic domain. Ca(2+)-binding residues include Gln109 and Asp114. Residues Cys115, His272, and Asn296 contribute to the active site. Ca(2+)-binding residues include Asp318 and Glu323. Residue Thr354 is modified to Phosphothreonine. Positions 355–525 (PDALKSRTLR…KKAGTQELDD (171 aa)) are domain III. The segment at 526–541 (QIQANLPDEKVLSEEE) is linker. EF-hand domains lie at 540–575 (EEID…IISK), 584–617 (FSLE…NRIR), 614–649 (NRIR…AGFK), and 679–713 (VRLE…TMFA). Positions 542–712 (IDDNFKTLFS…LFKWLQLTMF (171 aa)) are domain IV. 10 residues coordinate Ca(2+): Asp597, Asp599, Asn601, Lys603, Glu608, Asp627, Asp629, Ser631, Ser633, and Glu638.

This sequence belongs to the peptidase C2 family. In terms of assembly, forms a heterodimer with a small (regulatory) subunit CAPNS1. The cofactor is Ca(2+). In terms of processing, undergoes calcium-induced successive autoproteolytic cleavages that generate a membrane-bound 78 kDa active form and an intracellular 75 kDa active form. Calpastatin reduces with high efficiency the transition from 78 kDa to 75 kDa calpain forms.

It is found in the cytoplasm. The protein localises to the cell membrane. It catalyses the reaction Broad endopeptidase specificity.. With respect to regulation, activated by micromolar concentrations of calcium and inhibited by calpastatin. Calcium-regulated non-lysosomal thiol-protease which catalyzes limited proteolysis of substrates involved in cytoskeletal remodeling and signal transduction. Proteolytically cleaves CTBP1 at 'Asn-375', 'Gly-388' and 'His-410'. Cleaves and activates caspase-7 (CASP7). In Mus musculus (Mouse), this protein is Calpain-1 catalytic subunit.